We begin with the raw amino-acid sequence, 547 residues long: DNA polymerase kappa (547 aa).

The disordered stretch occupies residues L18–A39. Over residues I20–E31 the composition is skewed to acidic residues. The UmuC domain maps to I132–G316. Mg(2+) is bound by residues D136 and D226. The UBZ4-type zinc finger occupies T489–T518. Residues C492, C495, H509, and C513 each coordinate Zn(2+).

In terms of assembly, interacts with hus1 and rad17.

It localises to the cytoplasm. The protein localises to the nucleus. The catalysed reaction is DNA(n) + a 2'-deoxyribonucleoside 5'-triphosphate = DNA(n+1) + diphosphate. Functionally, DNA polymerase specifically involved in DNA repair. Plays an important role in translesion synthesis, where the normal high-fidelity DNA polymerases cannot proceed and DNA synthesis stalls. Has a role in meiosis. The chain is DNA polymerase kappa (mug40) from Schizosaccharomyces pombe (strain 972 / ATCC 24843) (Fission yeast).